We begin with the raw amino-acid sequence, 831 residues long: DNA helicase MCM8 (831 aa).

Positions 1–20 are enriched in gly residues; the sequence is MSQGWRGGSGGWRGGGGGNP. The tract at residues 1-53 is disordered; sequence MSQGWRGGSGGWRGGGGGNPYAGAWRGRPWRGRGQGGTWSRNNGRDPVCFAPP. An MCM domain is found at 395–602; it reads LFQLIVNSLC…DHDHLLSEHV (208 aa). Residue 447-454 participates in ATP binding; sequence GDPGLGKS.

It belongs to the MCM family. In terms of assembly, component of the MCM8-MCM9 complex, which forms a hexamer composed of mcm8 and mcm9.

The protein localises to the nucleus. The enzyme catalyses ATP + H2O = ADP + phosphate + H(+). Component of the MCM8-MCM9 complex, a complex involved in homologous recombination repair following DNA interstrand cross-links and plays a key role during gametogenesis. The MCM8-MCM9 complex probably acts as a hexameric helicase required to process aberrant forks into homologous recombination substrates and to orchestrate homologous recombination with resection, fork stabilization and fork restart. In eggs, required for elongation during DNA replication by facilitating the recruitment of rpa2/rpa34 and stimulating the processivity of DNA polymerases at replication foci. Probably not required for DNA replication in other cells. The chain is DNA helicase MCM8 (mcm8) from Xenopus laevis (African clawed frog).